Here is a 413-residue protein sequence, read N- to C-terminus: Hemolin (413 aa).

Residues 1–18 form the signal peptide; sequence MASKSLVVLSACIIIGSA. Ig-like C2-type domains are found at residues 25-112, 122-211, 233-322, and 327-413; these read PVLK…RVIS, PAKT…GEVR, PQYL…LKVT, and PKYV…VQVN. 4 disulfide bridges follow: Cys-46/Cys-97, Cys-140/Cys-199, Cys-252/Cys-305, and Cys-349/Cys-395. Asn-283 carries N-linked (GlcNAc...) asparagine glycosylation.

This sequence belongs to the hemolin family. As to expression, expressed in larval bristles.

It localises to the secreted. Its activity is regulated as follows. Increased activity in presence of phospholipids (low concentrations) and calcium ions. Inhibited by PMSF. Not affected by EDTA and E-64. In terms of biological role, bristle toxin involved in caterpillar defense by participating in hemorrhagic syndrome characterized by a consumptive coagulopathy. Exhibits procoagulant activity through selective factor X proteolytic activation. Activates factor X in a dose- and time-dependent manner but does not activate gamma-carboxyglutamic acid domainless factor X. Its activity does not depend on calcium ions. Also functions as a growth stimulator and an inhibitor of cellular death for endothelial cells. In vitro, increases proliferation of human umbilical vein endothelial cells (HUVEC) and inhibits the apoptosis induced by starvation. Also increases slightly the complement decay-accelerating factor (CD55), which protects cells from complement-mediated lysis. On the other hand, does not alter the release or expression of von Willebrand factor (VWF), tissue factor (F3), intercellular adhesion molecule-1 (ICAM1), interleukin-8 (CXCL8), and prostacyclin. Does not show fibrinolytic or fibrinogenolytic activities. The polypeptide is Hemolin (Lonomia obliqua (Moth)).